A 402-amino-acid chain; its full sequence is 4-hydroxy-3-methylbut-2-enyl diphosphate reductase (402 aa).

Residue C66 coordinates [4Fe-4S] cluster. Residue H96 participates in (2E)-4-hydroxy-3-methylbut-2-enyl diphosphate binding. Residue H96 coordinates dimethylallyl diphosphate. Residue H96 coordinates isopentenyl diphosphate. [4Fe-4S] cluster is bound at residue C157. Residue H185 coordinates (2E)-4-hydroxy-3-methylbut-2-enyl diphosphate. A dimethylallyl diphosphate-binding site is contributed by H185. H185 is a binding site for isopentenyl diphosphate. E187 serves as the catalytic Proton donor. A (2E)-4-hydroxy-3-methylbut-2-enyl diphosphate-binding site is contributed by T250. C288 contacts [4Fe-4S] cluster. (2E)-4-hydroxy-3-methylbut-2-enyl diphosphate contacts are provided by S317, S318, N319, and S379. Dimethylallyl diphosphate-binding residues include S317, S318, N319, and S379. S317, S318, N319, and S379 together coordinate isopentenyl diphosphate.

It belongs to the IspH family. It depends on [4Fe-4S] cluster as a cofactor.

It carries out the reaction isopentenyl diphosphate + 2 oxidized [2Fe-2S]-[ferredoxin] + H2O = (2E)-4-hydroxy-3-methylbut-2-enyl diphosphate + 2 reduced [2Fe-2S]-[ferredoxin] + 2 H(+). The catalysed reaction is dimethylallyl diphosphate + 2 oxidized [2Fe-2S]-[ferredoxin] + H2O = (2E)-4-hydroxy-3-methylbut-2-enyl diphosphate + 2 reduced [2Fe-2S]-[ferredoxin] + 2 H(+). It functions in the pathway isoprenoid biosynthesis; dimethylallyl diphosphate biosynthesis; dimethylallyl diphosphate from (2E)-4-hydroxy-3-methylbutenyl diphosphate: step 1/1. Its pathway is isoprenoid biosynthesis; isopentenyl diphosphate biosynthesis via DXP pathway; isopentenyl diphosphate from 1-deoxy-D-xylulose 5-phosphate: step 6/6. In terms of biological role, catalyzes the conversion of 1-hydroxy-2-methyl-2-(E)-butenyl 4-diphosphate (HMBPP) into a mixture of isopentenyl diphosphate (IPP) and dimethylallyl diphosphate (DMAPP). Acts in the terminal step of the DOXP/MEP pathway for isoprenoid precursor biosynthesis. The sequence is that of 4-hydroxy-3-methylbut-2-enyl diphosphate reductase from Crocosphaera subtropica (strain ATCC 51142 / BH68) (Cyanothece sp. (strain ATCC 51142)).